A 150-amino-acid polypeptide reads, in one-letter code: Small ribosomal subunit protein uS11y (150 aa).

Residues 129–150 (EDVTPVPTDSTRRKGGRRGRRL) are disordered. A compositionally biased stretch (basic residues) spans 141–150 (RKGGRRGRRL).

The protein belongs to the universal ribosomal protein uS11 family.

The sequence is that of Small ribosomal subunit protein uS11y from Zea mays (Maize).